The sequence spans 435 residues: Adenylosuccinate synthetase (435 aa).

Residues 20–26 (GDEGKGK) and 48–50 (GHT) contribute to the GTP site. The Proton acceptor role is filled by Asp-21. Positions 21 and 48 each coordinate Mg(2+). IMP is bound by residues 21–24 (DEGK), 46–49 (NAGH), Thr-134, Arg-148, Gln-229, Thr-244, and Arg-308. The active-site Proton donor is His-49. Position 304–310 (304–310 (TTTGRPR)) interacts with substrate. Residues Arg-310, 336–338 (KVD), and 422–424 (SMG) contribute to the GTP site.

It belongs to the adenylosuccinate synthetase family. Homodimer. The cofactor is Mg(2+).

Its subcellular location is the cytoplasm. The catalysed reaction is IMP + L-aspartate + GTP = N(6)-(1,2-dicarboxyethyl)-AMP + GDP + phosphate + 2 H(+). Its pathway is purine metabolism; AMP biosynthesis via de novo pathway; AMP from IMP: step 1/2. Plays an important role in the de novo pathway of purine nucleotide biosynthesis. Catalyzes the first committed step in the biosynthesis of AMP from IMP. The protein is Adenylosuccinate synthetase of Thermoplasma acidophilum (strain ATCC 25905 / DSM 1728 / JCM 9062 / NBRC 15155 / AMRC-C165).